The following is a 313-amino-acid chain: Tagatose-6-phosphate kinase (313 aa).

This sequence belongs to the carbohydrate kinase PfkB family. LacC subfamily.

It carries out the reaction D-tagatofuranose 6-phosphate + ATP = D-tagatofuranose 1,6-bisphosphate + ADP + H(+). It functions in the pathway carbohydrate metabolism; D-tagatose 6-phosphate degradation; D-glyceraldehyde 3-phosphate and glycerone phosphate from D-tagatose 6-phosphate: step 1/2. The protein is Tagatose-6-phosphate kinase of Enterococcus faecalis (strain ATCC 700802 / V583).